The primary structure comprises 292 residues: ATP synthase gamma chain (292 aa).

It belongs to the ATPase gamma chain family. As to quaternary structure, F-type ATPases have 2 components, CF(1) - the catalytic core - and CF(0) - the membrane proton channel. CF(1) has five subunits: alpha(3), beta(3), gamma(1), delta(1), epsilon(1). CF(0) has three main subunits: a, b and c.

It localises to the cell membrane. Functionally, produces ATP from ADP in the presence of a proton gradient across the membrane. The gamma chain is believed to be important in regulating ATPase activity and the flow of protons through the CF(0) complex. This is ATP synthase gamma chain from Streptococcus pneumoniae serotype 2 (strain D39 / NCTC 7466).